A 353-amino-acid chain; its full sequence is Methylthioribose-1-phosphate isomerase (353 aa).

Substrate contacts are provided by residues 51-53, arginine 94, and glutamine 199; that span reads RGA. Residue aspartate 240 is the Proton donor of the active site. 250–251 contributes to the substrate binding site; that stretch reads NK.

The protein belongs to the eIF-2B alpha/beta/delta subunits family. MtnA subfamily. Homodimer.

It carries out the reaction 5-(methylsulfanyl)-alpha-D-ribose 1-phosphate = 5-(methylsulfanyl)-D-ribulose 1-phosphate. Its pathway is amino-acid biosynthesis; L-methionine biosynthesis via salvage pathway; L-methionine from S-methyl-5-thio-alpha-D-ribose 1-phosphate: step 1/6. Catalyzes the interconversion of methylthioribose-1-phosphate (MTR-1-P) into methylthioribulose-1-phosphate (MTRu-1-P). This chain is Methylthioribose-1-phosphate isomerase, found in Bacillus velezensis (strain DSM 23117 / BGSC 10A6 / LMG 26770 / FZB42) (Bacillus amyloliquefaciens subsp. plantarum).